A 192-amino-acid polypeptide reads, in one-letter code: MVVGLFGGSFNPPHQGHALVAEIAIKRLGLDQLWWMVTPGNPLKSRNQLAPLAERIAESERVAADPRIKVTAFEQALGVSYTANTLARIKARNSHVHFIWIMGADSLQTFHKWQKWQEIARTFPIAVVDRPGATLSYLSSKMTRTFDFARVDEDDARILWRKSAPAWTFIHGPRSGLSSTAIRNGAVPGAVK.

It belongs to the NadD family.

It catalyses the reaction nicotinate beta-D-ribonucleotide + ATP + H(+) = deamido-NAD(+) + diphosphate. It functions in the pathway cofactor biosynthesis; NAD(+) biosynthesis; deamido-NAD(+) from nicotinate D-ribonucleotide: step 1/1. Catalyzes the reversible adenylation of nicotinate mononucleotide (NaMN) to nicotinic acid adenine dinucleotide (NaAD). The polypeptide is Probable nicotinate-nucleotide adenylyltransferase (Rhizobium etli (strain CIAT 652)).